The following is a 1055-amino-acid chain: MDS1 and EVI1 complex locus protein EVI1-A (1055 aa).

3 consecutive C2H2-type zinc fingers follow at residues 21–48 (YRCEECDQLFESKTELSDHQKYPCVTPH), 75–97 (HECKECDQVFPDMQSLEKHLLSH), and 103–125 (YKCDQCPKAFNWKSNLIRHQMSH). The C2H2-type 4; degenerate zinc-finger motif lies at 131–155 (YECENCSKQVFTDPSNLQRHIRSQH). 2 consecutive C2H2-type zinc fingers follow at residues 161 to 183 (HACSDCGKTFATSSGLKQHKHIH) and 189 to 211 (FVCEVCHKSYTQFSNLCRHKRMH). A C2H2-type 7; atypical zinc finger spans residues 218 to 240 (IKCKDCGQMFSTTSSLNKHRRFC). Disordered stretches follow at residues 324-345 (PVKGLPGVEQSSKSQSPHVNQP), 372-423 (FITE…SDKD), and 531-621 (VPLK…PELP). Over residues 332 to 345 (EQSSKSQSPHVNQP) the composition is skewed to polar residues. Residues 381-392 (RPHEKISDHSES) are compositionally biased toward basic and acidic residues. Positions 399-413 (STPSGSDLETTSGSD) are enriched in polar residues. Positions 422–435 (KDKLKENGKLYKDK) match the Nuclear localization signal motif. Basic and acidic residues predominate over residues 531 to 566 (VPLKIEPESPKETKKVQKGKTESPFDLTTKRKEEKA). The CTBP-binding motif 1 signature appears at 554-558 (PFDLT). Residues 569 to 583 (NVPSKSGAPTSSNHD) show a composition bias toward polar residues. Residues 585–589 (PLDLS) carry the CTBP-binding motif 2 motif. A compositionally biased stretch (polar residues) spans 591–601 (GSRSRAATTKQ). Residues 602 to 621 (TEPRKNHIFNEKKDMDPELP) show a composition bias toward basic and acidic residues. 3 C2H2-type zinc fingers span residues 734 to 756 (YTCRYCGKIFPRSANLTRHLRTH), 762 to 785 (YRCKYCDRSFSISSNLQRHVRNIH), and 791 to 813 (FKCHLCDRCFGQQTNLDRHLKKH). 2 disordered regions span residues 813–837 (HENGNLSGTAASSPHSEIEGTGPIL) and 922–957 (SVDEYEEGGKSEVNSKVSPSRYDDEDDDDDEEEDFK). Residues 816 to 827 (GNLSGTAASSPH) are compositionally biased toward polar residues. Positions 944-954 (DDEDDDDDEEE) are enriched in acidic residues.

In terms of assembly, homooligomer. Interacts with ctbp. As to expression, expressed dynamically during embryonic development; in the developing pronephros, specific areas of the brain (forebrain, midbrain and hindbrain), and in the majority of the visceral arch, and head mesenchyme derived from neural crest cells. Within the pronephros, expressed in the ventroposterior region of the pronephros anlagen from stage 20 (and is absent from the splanchnic layer that forms the glomus), then expression becomes restricted to the distal tubule and duct by the tadpole stage. In adults, expressed in various tissues including kidney, lung, testis, spleen and stomach.

The protein resides in the nucleus. The protein localises to the nucleus speckle. In terms of biological role, transcriptional repressor during pronephros development. Plays a role in regionalization of the pronephros; may promote formation of the distal tubule and duct over formation of the glomus and proximal tubule. The sequence is that of MDS1 and EVI1 complex locus protein EVI1-A (mecom-a) from Xenopus laevis (African clawed frog).